The following is a 698-amino-acid chain: Auxin response factor 22 (698 aa).

Positions 128–230 (FAKTLTQSDA…ELCVGIRRAK (103 aa)) form a DNA-binding region, TF-B3. A compositionally biased stretch (polar residues) spans 549–577 (TSSGSTETLSPGVTGNSSPNGNAHKTGNA). The disordered stretch occupies residues 549–579 (TSSGSTETLSPGVTGNSSPNGNAHKTGNASD). The region spanning 603–683 (AGHCKVFMES…RRLTIIAGDR (81 aa)) is the PB1 domain.

This sequence belongs to the ARF family. As to quaternary structure, homodimers and heterodimers. Expressed in roots, culms, leaves and young panicles.

It is found in the nucleus. Its function is as follows. Auxin response factors (ARFs) are transcriptional factors that bind specifically to the DNA sequence 5'-TGTCTC-3' found in the auxin-responsive promoter elements (AuxREs). The protein is Auxin response factor 22 (ARF22) of Oryza sativa subsp. japonica (Rice).